The chain runs to 1024 residues: Beta-galactosidase 2 (1024 aa).

Substrate-binding residues include asparagine 103 and aspartate 202. Aspartate 202 contributes to the Na(+) binding site. Residues glutamate 417, histidine 419, and glutamate 462 each coordinate Mg(2+). Substrate contacts are provided by residues glutamate 462 and 538–541 (EYAH). Glutamate 462 functions as the Proton donor in the catalytic mechanism. The active-site Nucleophile is the glutamate 538. Position 598 (asparagine 598) interacts with Mg(2+). Na(+)-binding residues include phenylalanine 602 and asparagine 605. Positions 605 and 1000 each coordinate substrate.

The protein belongs to the glycosyl hydrolase 2 family. As to quaternary structure, homotetramer. Mg(2+) serves as cofactor. Na(+) is required as a cofactor.

It carries out the reaction Hydrolysis of terminal non-reducing beta-D-galactose residues in beta-D-galactosides.. This is Beta-galactosidase 2 from Klebsiella pneumoniae subsp. pneumoniae (strain ATCC 700721 / MGH 78578).